We begin with the raw amino-acid sequence, 352 residues long: C-X-C chemokine receptor type 4 (352 aa).

The tract at residues 1–21 (MEGISIYTSDNYTEEIGSGDY) is important for chemokine binding and signaling. Over 1-38 (MEGISIYTSDNYTEEIGSGDYDSIKEPCFREENAHFNR) the chain is Extracellular. Y7 bears the Sulfotyrosine mark. N11 carries an N-linked (GlcNAc...) asparagine glycan. At Y12 the chain carries Sulfotyrosine. A glycan (O-linked (Xyl...) (chondroitin sulfate) serine) is linked at S18. Sulfotyrosine is present on Y21. Disulfide bonds link C28–C274 and C109–C186. Residues 39–63 (IFLPTIYSIIFLTGIVGNGLVILVM) traverse the membrane as a helical segment. The Cytoplasmic portion of the chain corresponds to 64-77 (GYQKKLRSMTDKYR). The helical transmembrane segment at 78-99 (LHLSVADLLFVITLPFWAVDAV) threads the bilayer. Residues 94–97 (WAVD) form a chemokine binding region. Over 100-110 (ANWYFGKFLCK) the chain is Extracellular. Residues 111 to 130 (AVHVIYTVNLYSSVLILAFI) form a helical membrane-spanning segment. The tract at residues 113–117 (HVIYT) is chemokine binding. Over 131–154 (SLDRYLAIVHATNSQRPRKLLAEK) the chain is Cytoplasmic. The short motif at 133–135 (DRY) is the Important for signaling element. The tract at residues 135-147 (YLAIVHATNSQRP) is involved in dimerization; when bound to chemokine. The helical transmembrane segment at 155–174 (VVYVGVWIPALLLTIPDFIF) threads the bilayer. Over 175–195 (ANVSEADDRYICDRFYPNDLW) the chain is Extracellular. The segment at 186-190 (CDRFY) is chemokine binding, important for signaling. The interval 191 to 210 (PNDLWVVVFQFQHIMVGLIL) is involved in dimerization. Residues 196 to 216 (VVVFQFQHIMVGLILPGIVIL) form a helical membrane-spanning segment. Residues 217–241 (SCYCIIISKLSHSKGHQKRKALKTT) are Cytoplasmic-facing. A helical membrane pass occupies residues 242–261 (VILILAFFACWLPYYIGISI). The Extracellular portion of the chain corresponds to 262 to 282 (DSFILLEIIRQGCEFENTVHK). An involved in dimerization region spans residues 266–268 (LLE). Residues 283–302 (WISITEALAFFHCCLNPILY) traverse the membrane as a helical segment. Residues 303–352 (AFLGAKFKTSAQHALTSVSRGSSLKILSKGKRGGHSSVSTESESSSFHSS) lie on the Cytoplasmic side of the membrane. A phosphoserine mark is found at S319 and S321. Phosphoserine; by PKC and GRK6 is present on residues S324 and S325. A disordered region spans residues 329-352 (LSKGKRGGHSSVSTESESSSFHSS). S330 is modified (phosphoserine; by GRK6). K331 participates in a covalent cross-link: Glycyl lysine isopeptide (Lys-Gly) (interchain with G-Cter in ubiquitin). Residues 337 to 352 (HSSVSTESESSSFHSS) show a composition bias toward low complexity. S339 carries the phosphoserine; by GRK6 modification. 2 positions are modified to phosphoserine: S348 and S351.

The protein belongs to the G-protein coupled receptor 1 family. Monomer. Can form homodimers. Interacts with CD164. Interacts with ARRB2; the interaction is dependent on the C-terminal phosphorylation of CXCR4 and allows activation of MAPK1 and MAPK3. Interacts with ARR3; the interaction is dependent on the C-terminal phosphorylation of CXCR4 and modulates calcium mobilization. Interacts with RNF113A; the interaction, enhanced by CXCL12, promotes CXCR4 ubiquitination and subsequent degradation. Interacts (via the cytoplasmic C-terminal) with ITCH (via the WW domains I and II); the interaction, enhanced by CXCL12, promotes CXCR4 ubiquitination and leads to its degradation. Interacts with extracellular ubiquitin. Interacts with DBN1; this interaction is enhanced by antigenic stimulation. Following LPS binding, may form a complex with GDF5, HSP90AA1 and HSPA8. Post-translationally, phosphorylated on agonist stimulation. Rapidly phosphorylated on serine and threonine residues in the C-terminal. Phosphorylation at Ser-324 and Ser-325 leads to recruitment of ITCH, ubiquitination and protein degradation. In terms of processing, ubiquitinated after ligand binding, leading to its degradation. Ubiquitinated by ITCH at the cell membrane on agonist stimulation. The ubiquitin-dependent mechanism, endosomal sorting complex required for transport (ESCRT), then targets CXCR4 for lysosomal degradation. This process is dependent also on prior Ser-/Thr-phosphorylation in the C-terminal of CXCR4. Also binding of ARRB1 to STAM negatively regulates CXCR4 sorting to lysosomes though modulating ubiquitination of SFR5S. Sulfation is required for efficient binding of CXCL12/SDF-1alpha and promotes its dimerization. Post-translationally, O- and N-glycosylated. N-glycosylation can mask coreceptor function. The O-glycosylation chondroitin sulfate attachment does not affect interaction with CXCL12/SDF-1alpha nor its coreceptor activity.

The protein localises to the cell membrane. It localises to the cell junction. Its subcellular location is the early endosome. It is found in the late endosome. The protein resides in the lysosome. In terms of biological role, receptor for the C-X-C chemokine CXCL12/SDF-1 that transduces a signal by increasing intracellular calcium ion levels and enhancing MAPK1/MAPK3 activation. Involved in the AKT signaling cascade. Plays a role in regulation of cell migration, e.g. during wound healing. Acts as a receptor for extracellular ubiquitin; leading to enhanced intracellular calcium ions and reduced cellular cAMP levels. Binds bacterial lipopolysaccharide (LPS) et mediates LPS-induced inflammatory response, including TNF secretion by monocytes. Involved in hematopoiesis and in cardiac ventricular septum formation. Also plays an essential role in vascularization of the gastrointestinal tract, probably by regulating vascular branching and/or remodeling processes in endothelial cells. Involved in cerebellar development. In the CNS, could mediate hippocampal-neuron survival. The chain is C-X-C chemokine receptor type 4 (CXCR4) from Callithrix jacchus (White-tufted-ear marmoset).